The primary structure comprises 339 residues: Ketol-acid reductoisomerase (NADP(+)) (339 aa).

Residues 1–182 (MRVYYDRDAD…GGGRAGIIET (182 aa)) form the KARI N-terminal Rossmann domain. NADP(+) contacts are provided by residues 24–27 (YGSQ), R48, S51, and 83–86 (DEGQ). H108 is a catalytic residue. G134 provides a ligand contact to NADP(+). A KARI C-terminal knotted domain is found at 183 to 328 (SFKEEVETDL…EKLRGMMPWI (146 aa)). Positions 191, 195, 227, and 231 each coordinate Mg(2+). S252 provides a ligand contact to substrate.

This sequence belongs to the ketol-acid reductoisomerase family. Mg(2+) serves as cofactor.

It catalyses the reaction (2R)-2,3-dihydroxy-3-methylbutanoate + NADP(+) = (2S)-2-acetolactate + NADPH + H(+). It carries out the reaction (2R,3R)-2,3-dihydroxy-3-methylpentanoate + NADP(+) = (S)-2-ethyl-2-hydroxy-3-oxobutanoate + NADPH + H(+). It participates in amino-acid biosynthesis; L-isoleucine biosynthesis; L-isoleucine from 2-oxobutanoate: step 2/4. The protein operates within amino-acid biosynthesis; L-valine biosynthesis; L-valine from pyruvate: step 2/4. In terms of biological role, involved in the biosynthesis of branched-chain amino acids (BCAA). Catalyzes an alkyl-migration followed by a ketol-acid reduction of (S)-2-acetolactate (S2AL) to yield (R)-2,3-dihydroxy-isovalerate. In the isomerase reaction, S2AL is rearranged via a Mg-dependent methyl migration to produce 3-hydroxy-3-methyl-2-ketobutyrate (HMKB). In the reductase reaction, this 2-ketoacid undergoes a metal-dependent reduction by NADPH to yield (R)-2,3-dihydroxy-isovalerate. In Gluconacetobacter diazotrophicus (strain ATCC 49037 / DSM 5601 / CCUG 37298 / CIP 103539 / LMG 7603 / PAl5), this protein is Ketol-acid reductoisomerase (NADP(+)).